We begin with the raw amino-acid sequence, 575 residues long: Intermediate filament protein ifa-1 (575 aa).

2 disordered regions span residues 1-30 (MMEITRETMSFTSTTPSARAPLGGRTTGNV) and 45-72 (SGAGSGLSPFGQNAASTIRDSREREKKE). The interval 1 to 72 (MMEITRETMS…RDSREREKKE (72 aa)) is head. Residues 7–17 (ETMSFTSTTPS) show a composition bias toward polar residues. Over residues 63-72 (RDSREREKKE) the composition is skewed to basic and acidic residues. Residues 69–422 (EKKEMSDLND…KMLEGEENRA (354 aa)) enclose the IF rod domain. The tract at residues 73–104 (MSDLNDRLASYIEKVRFLEAQNRKLAADLDAL) is coil 1A. The tract at residues 105-118 (RSKWGKDTHNIRNM) is linker 1. Residues 119 to 256 (YEGELVDAQK…RVHDNEIKEL (138 aa)) form a coil 1B region. The interval 257–274 (QTLASRDTTPENREFFKN) is linker 12. Positions 275–422 (ELSSAIRDIR…KMLEGEENRA (148 aa)) are coil 2. The segment at 423–572 (GLKQLVEQVV…EERATHIQRQ (150 aa)) is tail. Positions 455 to 572 (SRQSFQRSAK…EERATHIQRQ (118 aa)) constitute an LTD domain.

Belongs to the intermediate filament family. Forms some heteromeric filaments with ifb-1. As to expression, isoform d is abundantly expressed in the marginal cells of the pharynx, forming apicobasally oriented thick filament bundles that are attached to the apical and basal plasma membrane by hemi-adherens junctions. Expression of isoform c is also seen in the excretory cells and in the uterus. Isoform c is detectable in the amphid sensory neurins and the pharyngeal-intestinal valve. Both isoform c and isoform d are expressed in the rectum and vulva and in some neurons of the tail. In larvae, expression is seen in the excretory cell, the vulva, the rectum and in the thick filament bundles of the pharynx. Expression in pharynx begins in late embryos.

Its subcellular location is the cytoplasm. In terms of biological role, cytoplasmic intermediate filaments make up the structural component of the cytoskeleton providing mechanical strength to cells. Essential protein required during embryogenesis especially for survival past the L1 larva stage, involved in intestine morphogenesis. This chain is Intermediate filament protein ifa-1 (ifa-1), found in Caenorhabditis elegans.